Here is a 441-residue protein sequence, read N- to C-terminus: CBL-interacting serine/threonine-protein kinase 3 (441 aa).

A Protein kinase domain is found at 14 to 269 (YEVGRTIGEG…PQEVFEDEWF (256 aa)). Residues 20–28 (IGEGTFAKV) and Lys-43 each bind ATP. Asp-137 (proton acceptor) is an active-site residue. The activation loop stretch occupies residues 155 to 184 (DFGLSALSQQVRDDGLLHTSCGTPNYVAPE). Residues 307–331 (EQPAAINAFEIISMSRGLNLENLFD) form the NAF domain. Residues 337–366 (KRETRITLRGGANEIIEKIEEAAKPLGFDV) are PPI.

This sequence belongs to the protein kinase superfamily. CAMK Ser/Thr protein kinase family. SNF1 subfamily. Interacts with CBL3 and CBL9. The cofactor is Mn(2+). As to expression, mostly expressed in germinating seeds and young seedlings. Detected at low levels in roots, stems, leaves and flowers.

It catalyses the reaction L-seryl-[protein] + ATP = O-phospho-L-seryl-[protein] + ADP + H(+). The catalysed reaction is L-threonyl-[protein] + ATP = O-phospho-L-threonyl-[protein] + ADP + H(+). In terms of biological role, involved in the resistance to some abiotic stresses (e.g. high salt, hyperosmotic stress) in young seedlings, by regulating the expression of several stress-inducible genes (cold- and salt-induced genes but not drought-responsive genes). Required for the ABA response during germination. CIPK serine-threonine protein kinases interact with CBL proteins. Binding of a CBL protein to the regulatory NAF domain of CIPK protein lead to the activation of the kinase in a calcium-dependent manner. The CBL9/CIPK3 complex acts in the regulation of abscisic acid response in seed germination. The polypeptide is CBL-interacting serine/threonine-protein kinase 3 (CIPK3) (Arabidopsis thaliana (Mouse-ear cress)).